The following is a 438-amino-acid chain: NADH-quinone oxidoreductase subunit D (438 aa).

It belongs to the complex I 49 kDa subunit family. NDH-1 is composed of 14 different subunits. Subunits NuoB, C, D, E, F, and G constitute the peripheral sector of the complex.

It localises to the cell membrane. The enzyme catalyses a quinone + NADH + 5 H(+)(in) = a quinol + NAD(+) + 4 H(+)(out). Functionally, NDH-1 shuttles electrons from NADH, via FMN and iron-sulfur (Fe-S) centers, to quinones in the respiratory chain. The immediate electron acceptor for the enzyme in this species is believed to be a menaquinone. Couples the redox reaction to proton translocation (for every two electrons transferred, four hydrogen ions are translocated across the cytoplasmic membrane), and thus conserves the redox energy in a proton gradient. The protein is NADH-quinone oxidoreductase subunit D of Rhodococcus jostii (strain RHA1).